The sequence spans 486 residues: Glycogen synthase (486 aa).

Position 15 (K15) interacts with ADP-alpha-D-glucose.

It belongs to the glycosyltransferase 1 family. Bacterial/plant glycogen synthase subfamily.

The catalysed reaction is [(1-&gt;4)-alpha-D-glucosyl](n) + ADP-alpha-D-glucose = [(1-&gt;4)-alpha-D-glucosyl](n+1) + ADP + H(+). It functions in the pathway glycan biosynthesis; glycogen biosynthesis. In terms of biological role, synthesizes alpha-1,4-glucan chains using ADP-glucose. This Thermotoga maritima (strain ATCC 43589 / DSM 3109 / JCM 10099 / NBRC 100826 / MSB8) protein is Glycogen synthase.